The sequence spans 159 residues: Phosphopantetheine adenylyltransferase (159 aa).

Ser-9 is a substrate binding site. Residues 9 to 10 (SF) and His-17 each bind ATP. Substrate contacts are provided by Lys-41, Ile-75, and Lys-89. ATP contacts are provided by residues 90–92 (GLR), Glu-100, and 124–130 (LEHISSS).

The protein belongs to the bacterial CoaD family. In terms of assembly, homohexamer. Mg(2+) is required as a cofactor.

It is found in the cytoplasm. The catalysed reaction is (R)-4'-phosphopantetheine + ATP + H(+) = 3'-dephospho-CoA + diphosphate. Its pathway is cofactor biosynthesis; coenzyme A biosynthesis; CoA from (R)-pantothenate: step 4/5. Its function is as follows. Reversibly transfers an adenylyl group from ATP to 4'-phosphopantetheine, yielding dephospho-CoA (dPCoA) and pyrophosphate. In Bifidobacterium animalis subsp. lactis (strain AD011), this protein is Phosphopantetheine adenylyltransferase.